We begin with the raw amino-acid sequence, 490 residues long: Aspartyl/glutamyl-tRNA(Asn/Gln) amidotransferase subunit B (490 aa).

It belongs to the GatB/GatE family. GatB subfamily. As to quaternary structure, heterotrimer of A, B and C subunits.

The catalysed reaction is L-glutamyl-tRNA(Gln) + L-glutamine + ATP + H2O = L-glutaminyl-tRNA(Gln) + L-glutamate + ADP + phosphate + H(+). It catalyses the reaction L-aspartyl-tRNA(Asn) + L-glutamine + ATP + H2O = L-asparaginyl-tRNA(Asn) + L-glutamate + ADP + phosphate + 2 H(+). Its function is as follows. Allows the formation of correctly charged Asn-tRNA(Asn) or Gln-tRNA(Gln) through the transamidation of misacylated Asp-tRNA(Asn) or Glu-tRNA(Gln) in organisms which lack either or both of asparaginyl-tRNA or glutaminyl-tRNA synthetases. The reaction takes place in the presence of glutamine and ATP through an activated phospho-Asp-tRNA(Asn) or phospho-Glu-tRNA(Gln). The polypeptide is Aspartyl/glutamyl-tRNA(Asn/Gln) amidotransferase subunit B (Burkholderia ambifaria (strain MC40-6)).